The primary structure comprises 165 residues: Nucleotide-binding protein P9215_05621 (165 aa).

The protein belongs to the YajQ family.

Its function is as follows. Nucleotide-binding protein. This is Nucleotide-binding protein P9215_05621 from Prochlorococcus marinus (strain MIT 9215).